Here is a 236-residue protein sequence, read N- to C-terminus: tRNA1(Val) (adenine(37)-N6)-methyltransferase (236 aa).

It belongs to the methyltransferase superfamily. tRNA (adenine-N(6)-)-methyltransferase family.

Its subcellular location is the cytoplasm. The catalysed reaction is adenosine(37) in tRNA1(Val) + S-adenosyl-L-methionine = N(6)-methyladenosine(37) in tRNA1(Val) + S-adenosyl-L-homocysteine + H(+). Its function is as follows. Specifically methylates the adenine in position 37 of tRNA(1)(Val) (anticodon cmo5UAC). The chain is tRNA1(Val) (adenine(37)-N6)-methyltransferase from Actinobacillus pleuropneumoniae serotype 7 (strain AP76).